The chain runs to 207 residues: Outer-membrane lipoprotein LolB (207 aa).

The N-terminal stretch at 1–21 (MPQPDFRLIRLLPLAALVLTA) is a signal peptide. Residue Cys-22 is the site of N-palmitoyl cysteine attachment. Cys-22 carries the S-diacylglycerol cysteine lipid modification.

This sequence belongs to the LolB family. In terms of assembly, monomer.

It localises to the cell outer membrane. Its function is as follows. Plays a critical role in the incorporation of lipoproteins in the outer membrane after they are released by the LolA protein. The protein is Outer-membrane lipoprotein LolB of Shigella sonnei (strain Ss046).